The chain runs to 1102 residues: Carbamoyl phosphate synthase large chain (1102 aa).

Residues 1 to 408 form a carboxyphosphate synthetic domain region; the sequence is MPKRTDIQSV…AFQKALRSLE (408 aa). ATP-binding residues include Arg-129, Arg-175, Gly-181, Gly-182, Glu-214, Ile-216, Glu-221, Gly-247, Val-248, His-249, Gln-291, and Glu-305. The ATP-grasp 1 domain occupies 137 to 334; the sequence is EEVRKKIGHG…IAKIAAKLAV (198 aa). Residues Gln-291, Glu-305, and Asn-307 each contribute to the Mg(2+) site. Mn(2+) contacts are provided by Gln-291, Glu-305, and Asn-307. Residues 409–551 form an oligomerization domain region; that stretch reads KKGSQFTFVG…YFYSSYDEES (143 aa). The interval 552–954 is carbamoyl phosphate synthetic domain; sequence EVAPREKPAV…AYAKSQAGAY (403 aa). In terms of domain architecture, ATP-grasp 2 spans 682-873; it reads GRVLAEAGLP…LAKAAARISL (192 aa). ATP contacts are provided by Arg-718, Arg-757, Leu-759, Glu-764, Gly-789, Ile-790, His-791, Ser-792, Gln-832, and Glu-844. Residues Gln-832, Glu-844, and Asn-846 each contribute to the Mg(2+) site. Residues Gln-832, Glu-844, and Asn-846 each contribute to the Mn(2+) site. One can recognise an MGS-like domain in the interval 955-1100; it reads GPLPTKGRAF…QEHAAFLIAA (146 aa). The tract at residues 955–1102 is allosteric domain; it reads GPLPTKGRAF…HAAFLIAARD (148 aa).

This sequence belongs to the CarB family. In terms of assembly, composed of two chains; the small (or glutamine) chain promotes the hydrolysis of glutamine to ammonia, which is used by the large (or ammonia) chain to synthesize carbamoyl phosphate. Tetramer of heterodimers (alpha,beta)4. Requires Mg(2+) as cofactor. The cofactor is Mn(2+).

The catalysed reaction is hydrogencarbonate + L-glutamine + 2 ATP + H2O = carbamoyl phosphate + L-glutamate + 2 ADP + phosphate + 2 H(+). The enzyme catalyses hydrogencarbonate + NH4(+) + 2 ATP = carbamoyl phosphate + 2 ADP + phosphate + 2 H(+). Its pathway is amino-acid biosynthesis; L-arginine biosynthesis; carbamoyl phosphate from bicarbonate: step 1/1. It functions in the pathway pyrimidine metabolism; UMP biosynthesis via de novo pathway; (S)-dihydroorotate from bicarbonate: step 1/3. In terms of biological role, large subunit of the glutamine-dependent carbamoyl phosphate synthetase (CPSase). CPSase catalyzes the formation of carbamoyl phosphate from the ammonia moiety of glutamine, carbonate, and phosphate donated by ATP, constituting the first step of 2 biosynthetic pathways, one leading to arginine and/or urea and the other to pyrimidine nucleotides. The large subunit (synthetase) binds the substrates ammonia (free or transferred from glutamine from the small subunit), hydrogencarbonate and ATP and carries out an ATP-coupled ligase reaction, activating hydrogencarbonate by forming carboxy phosphate which reacts with ammonia to form carbamoyl phosphate. The chain is Carbamoyl phosphate synthase large chain from Streptomyces coelicolor (strain ATCC BAA-471 / A3(2) / M145).